The chain runs to 316 residues: Acetyl-coenzyme A carboxylase carboxyl transferase subunit alpha (316 aa).

One can recognise a CoA carboxyltransferase C-terminal domain in the interval 40 to 293; that stretch reads LEKRSRDALR…GDLIAKTMKE (254 aa).

Belongs to the AccA family. Acetyl-CoA carboxylase is a heterohexamer composed of biotin carboxyl carrier protein (AccB), biotin carboxylase (AccC) and two subunits each of ACCase subunit alpha (AccA) and ACCase subunit beta (AccD).

Its subcellular location is the cytoplasm. It carries out the reaction N(6)-carboxybiotinyl-L-lysyl-[protein] + acetyl-CoA = N(6)-biotinyl-L-lysyl-[protein] + malonyl-CoA. The protein operates within lipid metabolism; malonyl-CoA biosynthesis; malonyl-CoA from acetyl-CoA: step 1/1. Functionally, component of the acetyl coenzyme A carboxylase (ACC) complex. First, biotin carboxylase catalyzes the carboxylation of biotin on its carrier protein (BCCP) and then the CO(2) group is transferred by the carboxyltransferase to acetyl-CoA to form malonyl-CoA. The protein is Acetyl-coenzyme A carboxylase carboxyl transferase subunit alpha of Mesorhizobium japonicum (strain LMG 29417 / CECT 9101 / MAFF 303099) (Mesorhizobium loti (strain MAFF 303099)).